A 481-amino-acid chain; its full sequence is Protein nucleotidyltransferase YdiU (481 aa).

ATP is bound by residues G85, G87, R88, K108, D120, G121, R172, and R179. D248 serves as the catalytic Proton acceptor. N249 and D258 together coordinate Mg(2+). D258 contributes to the ATP binding site.

This sequence belongs to the SELO family. Mg(2+) is required as a cofactor. Mn(2+) serves as cofactor.

It carries out the reaction L-seryl-[protein] + ATP = 3-O-(5'-adenylyl)-L-seryl-[protein] + diphosphate. The enzyme catalyses L-threonyl-[protein] + ATP = 3-O-(5'-adenylyl)-L-threonyl-[protein] + diphosphate. The catalysed reaction is L-tyrosyl-[protein] + ATP = O-(5'-adenylyl)-L-tyrosyl-[protein] + diphosphate. It catalyses the reaction L-histidyl-[protein] + UTP = N(tele)-(5'-uridylyl)-L-histidyl-[protein] + diphosphate. It carries out the reaction L-seryl-[protein] + UTP = O-(5'-uridylyl)-L-seryl-[protein] + diphosphate. The enzyme catalyses L-tyrosyl-[protein] + UTP = O-(5'-uridylyl)-L-tyrosyl-[protein] + diphosphate. Functionally, nucleotidyltransferase involved in the post-translational modification of proteins. It can catalyze the addition of adenosine monophosphate (AMP) or uridine monophosphate (UMP) to a protein, resulting in modifications known as AMPylation and UMPylation. The protein is Protein nucleotidyltransferase YdiU of Cereibacter sphaeroides (strain ATCC 17029 / ATH 2.4.9) (Rhodobacter sphaeroides).